The chain runs to 608 residues: 1-deoxy-D-xylulose-5-phosphate synthase (608 aa).

Thiamine diphosphate-binding positions include H66 and 107–109 (GHA). D138 provides a ligand contact to Mg(2+). Residues 139–140 (GA), N167, F277, and E350 each bind thiamine diphosphate. Mg(2+) is bound at residue N167.

Belongs to the transketolase family. DXPS subfamily. As to quaternary structure, homodimer. Mg(2+) serves as cofactor. The cofactor is thiamine diphosphate.

The catalysed reaction is D-glyceraldehyde 3-phosphate + pyruvate + H(+) = 1-deoxy-D-xylulose 5-phosphate + CO2. It functions in the pathway metabolic intermediate biosynthesis; 1-deoxy-D-xylulose 5-phosphate biosynthesis; 1-deoxy-D-xylulose 5-phosphate from D-glyceraldehyde 3-phosphate and pyruvate: step 1/1. Its function is as follows. Catalyzes the acyloin condensation reaction between C atoms 2 and 3 of pyruvate and glyceraldehyde 3-phosphate to yield 1-deoxy-D-xylulose-5-phosphate (DXP). The sequence is that of 1-deoxy-D-xylulose-5-phosphate synthase from Thermotoga petrophila (strain ATCC BAA-488 / DSM 13995 / JCM 10881 / RKU-1).